The sequence spans 83 residues: Small ribosomal subunit protein uS17 (83 aa).

It belongs to the universal ribosomal protein uS17 family. In terms of assembly, part of the 30S ribosomal subunit.

Its function is as follows. One of the primary rRNA binding proteins, it binds specifically to the 5'-end of 16S ribosomal RNA. This is Small ribosomal subunit protein uS17 from Chlamydia abortus (strain DSM 27085 / S26/3) (Chlamydophila abortus).